The primary structure comprises 260 residues: MIRAENITLIRTGRRLLDDVSVDLKPGKVNVIIGPNGAGKSTLMKVLSGEMRAEGGSVTYNNVALPQFTPVQLARMRAVLPQNTQLAFPFTALEIVRMGAVAQGSRAPEEQARRALARAGLRGFEQRSYNMLSGGEQQRVQFARALAQVPNSVENGEARALFLDEPTASLDIGHQISVLETARDFASGGGLVLAILHDLNLAAEFADQLIVMHGGRVTASGPSLDTISDETIARVYGIGGVVGRLPARHIPYVLPQSRHR.

An ABC transporter domain is found at 2–239; it reads IRAENITLIR…ETIARVYGIG (238 aa). 34–41 is a binding site for ATP; that stretch reads GPNGAGKS.

This sequence belongs to the ABC transporter superfamily. Heme (hemin) importer (TC 3.A.1.14.5) family. The complex is composed of two ATP-binding proteins (HmuV), two transmembrane proteins (HmuU) and a solute-binding protein (HmuT).

Its subcellular location is the cell inner membrane. Its function is as follows. Part of the ABC transporter complex HmuTUV involved in hemin import. Responsible for energy coupling to the transport system. This is Hemin import ATP-binding protein HmuV from Agrobacterium fabrum (strain C58 / ATCC 33970) (Agrobacterium tumefaciens (strain C58)).